Consider the following 97-residue polypeptide: Large ribosomal subunit protein uL23 (97 aa).

It belongs to the universal ribosomal protein uL23 family. In terms of assembly, part of the 50S ribosomal subunit. Contacts protein L29, and trigger factor when it is bound to the ribosome.

Functionally, one of the early assembly proteins it binds 23S rRNA. One of the proteins that surrounds the polypeptide exit tunnel on the outside of the ribosome. Forms the main docking site for trigger factor binding to the ribosome. In Mesorhizobium japonicum (strain LMG 29417 / CECT 9101 / MAFF 303099) (Mesorhizobium loti (strain MAFF 303099)), this protein is Large ribosomal subunit protein uL23.